Reading from the N-terminus, the 110-residue chain is Hydrogenase maturation factor HypA (110 aa).

His2 is a binding site for Ni(2+). 4 residues coordinate Zn(2+): Cys70, Cys73, Cys86, and Cys89.

Belongs to the HypA/HybF family.

Its function is as follows. Involved in the maturation of [NiFe] hydrogenases. Required for nickel insertion into the metal center of the hydrogenase. The chain is Hydrogenase maturation factor HypA from Geotalea daltonii (strain DSM 22248 / JCM 15807 / FRC-32) (Geobacter daltonii).